Reading from the N-terminus, the 78-residue chain is Acyl carrier protein (78 aa).

A Carrier domain is found at 2–77 (SNIEQQVKKI…LAIDYINAHN (76 aa)). An O-(pantetheine 4'-phosphoryl)serine modification is found at serine 37.

Belongs to the acyl carrier protein (ACP) family. Post-translationally, 4'-phosphopantetheine is transferred from CoA to a specific serine of apo-ACP by AcpS. This modification is essential for activity because fatty acids are bound in thioester linkage to the sulfhydryl of the prosthetic group.

It localises to the cytoplasm. Its pathway is lipid metabolism; fatty acid biosynthesis. In terms of biological role, carrier of the growing fatty acid chain in fatty acid biosynthesis. The sequence is that of Acyl carrier protein from Neisseria meningitidis serogroup C / serotype 2a (strain ATCC 700532 / DSM 15464 / FAM18).